We begin with the raw amino-acid sequence, 185 residues long: ATP synthase subunit delta (185 aa).

This sequence belongs to the ATPase delta chain family. F-type ATPases have 2 components, F(1) - the catalytic core - and F(0) - the membrane proton channel. F(1) has five subunits: alpha(3), beta(3), gamma(1), delta(1), epsilon(1). CF(0) has four main subunits: a(1), b(1), b'(1) and c(10-14). The alpha and beta chains form an alternating ring which encloses part of the gamma chain. F(1) is attached to F(0) by a central stalk formed by the gamma and epsilon chains, while a peripheral stalk is formed by the delta, b and b' chains.

The protein resides in the cellular thylakoid membrane. In terms of biological role, f(1)F(0) ATP synthase produces ATP from ADP in the presence of a proton or sodium gradient. F-type ATPases consist of two structural domains, F(1) containing the extramembraneous catalytic core and F(0) containing the membrane proton channel, linked together by a central stalk and a peripheral stalk. During catalysis, ATP synthesis in the catalytic domain of F(1) is coupled via a rotary mechanism of the central stalk subunits to proton translocation. Functionally, this protein is part of the stalk that links CF(0) to CF(1). It either transmits conformational changes from CF(0) to CF(1) or is implicated in proton conduction. The complex from the organism is particularly stable to disruption and remains functional after 6 hrs at 55 degrees Celsius. The sequence is that of ATP synthase subunit delta from Thermosynechococcus vestitus (strain NIES-2133 / IAM M-273 / BP-1).